The primary structure comprises 362 residues: Atypical chemokine receptor 3 (362 aa).

The Extracellular segment spans residues 1-40; sequence MDLHLFDYAEPGNFSDISWPCNSSDCIVVDTVLCPNMPNK. 3 N-linked (GlcNAc...) asparagine glycosylation sites follow: Asn-13, Asn-22, and Asn-39. A helical transmembrane segment spans residues 41–61; sequence SVLLYTLSFIYIFIFVIGMIA. The Cytoplasmic segment spans residues 62–81; the sequence is NSVVVWVNIQAKTTGYDTHC. Residues 82–102 form a helical membrane-spanning segment; it reads YILNLAIADLWVVVTIPVWVV. At 103-118 the chain is on the extracellular side; that stretch reads SLVQHNQWPMGELTCK. A disulfide bridge links Cys-117 with Cys-196. A helical membrane pass occupies residues 119-139; the sequence is ITHLIFSINLFGSIFFLTCMS. Over 140–162 the chain is Cytoplasmic; that stretch reads VDRYLSITYFASTSSRRKKVVRR. The chain crosses the membrane as a helical span at residues 163–183; sequence AVCVLVWLLAFCVSLPDTYYL. Topologically, residues 184 to 213 are extracellular; the sequence is KTVTSASNNETYCRSFYPEHSVKEWLISME. Residues 214 to 234 traverse the membrane as a helical segment; it reads LVSVVLGFAIPFCVIAVFYCL. At 235–252 the chain is on the cytoplasmic side; it reads LARAISASSDQEKQSSRK. The chain crosses the membrane as a helical span at residues 253–273; sequence IIFSYVVVFLVCWLPYHVVVL. The Extracellular segment spans residues 274–296; it reads LDIFSILHYIPFTCQLENFLFTA. A helical transmembrane segment spans residues 297–319; the sequence is LHVTQCLSLVHCCVNPVLYSFIN. Residues 320-362 lie on the Cytoplasmic side of the membrane; that stretch reads RNYRYELMKAFIFKYSAKTGLTKLIDASRVSETEYSALEQNAK. Residues 324–362 are C-terminal cytoplasmic tail; sequence YELMKAFIFKYSAKTGLTKLIDASRVSETEYSALEQNAK. Residues Ser-347, Ser-350, and Ser-355 each carry the phosphoserine modification.

Belongs to the G-protein coupled receptor 1 family. Atypical chemokine receptor subfamily. Homodimer. Can form heterodimers with CXCR4; heterodimerization may regulate CXCR4 signaling activity. Interacts with ARRB1 and ARRB2. Post-translationally, the Ser/Thr residues in the C-terminal cytoplasmic tail may be phosphorylated. Ubiquitinated at the Lys residues in its C-terminal cytoplasmic tail and is essential for correct trafficking from and to the cell membrane. Deubiquitinated by CXCL12-stimulation in a reversible manner.

Its subcellular location is the cell membrane. It localises to the early endosome. It is found in the recycling endosome. Functionally, atypical chemokine receptor that controls chemokine levels and localization via high-affinity chemokine binding that is uncoupled from classic ligand-driven signal transduction cascades, resulting instead in chemokine sequestration, degradation, or transcytosis. Also known as interceptor (internalizing receptor) or chemokine-scavenging receptor or chemokine decoy receptor. Acts as a receptor for chemokines CXCL11 and CXCL12/SDF1. Chemokine binding does not activate G-protein-mediated signal transduction but instead induces beta-arrestin recruitment, leading to ligand internalization and activation of MAPK signaling pathway. Required for regulation of CXCR4 protein levels in migrating interneurons, thereby adapting their chemokine responsiveness. In glioma cells, transduces signals via MEK/ERK pathway, mediating resistance to apoptosis. Promotes cell growth and survival. Not involved in cell migration, adhesion or proliferation of normal hematopoietic progenitors but activated by CXCL11 in malignant hemapoietic cells, leading to phosphorylation of ERK1/2 (MAPK3/MAPK1) and enhanced cell adhesion and migration. Plays a regulatory role in CXCR4-mediated activation of cell surface integrins by CXCL12. Required for heart valve development. Regulates axon guidance in the oculomotor system through the regulation of CXCL12 levels. In Canis lupus familiaris (Dog), this protein is Atypical chemokine receptor 3 (ACKR3).